The following is a 230-amino-acid chain: UPF0173 metal-dependent hydrolase Pden_0574 (230 aa).

Belongs to the UPF0173 family.

In Paracoccus denitrificans (strain Pd 1222), this protein is UPF0173 metal-dependent hydrolase Pden_0574.